Reading from the N-terminus, the 834-residue chain is Arf-GAP with coiled-coil, ANK repeat and PH domain-containing protein 3 (834 aa).

The 96-residue stretch at 268–363 folds into the PH domain; sequence GVVMEGYLFK…WVQAVQASIA (96 aa). The segment at 375 to 400 is disordered; sequence SERLDRTASPSTSSIDSATDTRERGV. Polar residues predominate over residues 382–392; it reads ASPSTSSIDSA. The Arf-GAP domain maps to 403-525; it reads ESVLQRVQSV…KFLRKAPMAP (123 aa). The C4-type zinc-finger motif lies at 418-441; sequence CGDCGQPDPRWASINLGVLLCIEC. The interval 633–653 is disordered; it reads SVTEEEGAESEESSGEADGDT. Residues 634-653 are compositionally biased toward acidic residues; the sequence is VTEEEGAESEESSGEADGDT. ANK repeat units lie at residues 702 to 731, 735 to 764, and 768 to 797; these read EGKTPLVQAVLGGSLIVCEFLLQNGADVNQ, RGRAPLHHATLLGRTGQVCLFLKRGADQHA, and EQRDPLAIAVQAANADIVTLLRLARMAEEM.

GTPase-activating protein for the ADP ribosylation factor family. The protein is Arf-GAP with coiled-coil, ANK repeat and PH domain-containing protein 3 (ACAP3) of Homo sapiens (Human).